A 374-amino-acid chain; its full sequence is Eukaryotic translation initiation factor 3 subunit M (374 aa).

Residues 180-339 enclose the PCI domain; that stretch reads TAAKVMVELL…RKVVVSHSTH (160 aa).

It belongs to the eIF-3 subunit M family. Component of the eukaryotic translation initiation factor 3 (eIF-3) complex, which is composed of 13 subunits: EIF3A, EIF3B, EIF3C, EIF3D, EIF3E, EIF3F, EIF3G, EIF3H, EIF3I, EIF3J, EIF3K, EIF3L and EIF3M.

The protein localises to the cytoplasm. Functionally, component of the eukaryotic translation initiation factor 3 (eIF-3) complex, which is involved in protein synthesis of a specialized repertoire of mRNAs and, together with other initiation factors, stimulates binding of mRNA and methionyl-tRNAi to the 40S ribosome. The eIF-3 complex specifically targets and initiates translation of a subset of mRNAs involved in cell proliferation. This chain is Eukaryotic translation initiation factor 3 subunit M, found in Gallus gallus (Chicken).